Here is a 133-residue protein sequence, read N- to C-terminus: NLP effector protein 14 (133 aa).

Residues 1–9 (MYSWYFPKD) carry the Conserved undecapeptide motifI I motif. The Hepta-peptide GHRHDWE motif II motif lies at 16-22 (GHRHDWE).

Belongs to the Necrosis inducing protein (NPP1) family.

It is found in the secreted. Functionally, secreted effector that contributes strongly to virulence during infection by P.capsici. Causes large necrotic areas in both host C.annuum and non-host N.benthamiana. The protein is NLP effector protein 14 of Phytophthora capsici.